Reading from the N-terminus, the 308-residue chain is MSITGMDSSHVTESQGALLFNEPLAEYTTWRVGGPAARLYKPANIDDLALFLSRLPFDEPLLWLGLGSNSLIRDGGFSGTVILTQGCLKEMTLLSDNCIRVEAGVSCASMARFSARNNLSGGEFWAGIPGTMGGALRMNAGCHGGETWQSVIEVQTINRRGEIRTRKPEEFEVAYRHVAGLGDEWFISAKLQLSPGNKETSLQLIKDLLAHRAKTQPTNEYNCGSVFRNPPGDFAARLIESCGLKGVSIGGAVVSEKHANFIINHQGTATAANIEALIHLVQTKVREQTSIELIREVHIIGDANVQTR.

The FAD-binding PCMH-type domain occupies 32–196 (VGGPAARLYK…ISAKLQLSPG (165 aa)). Arg-176 is an active-site residue. Ser-225 serves as the catalytic Proton donor. The active site involves Glu-296.

The protein belongs to the MurB family. The cofactor is FAD.

It localises to the cytoplasm. The enzyme catalyses UDP-N-acetyl-alpha-D-muramate + NADP(+) = UDP-N-acetyl-3-O-(1-carboxyvinyl)-alpha-D-glucosamine + NADPH + H(+). Its pathway is cell wall biogenesis; peptidoglycan biosynthesis. Cell wall formation. The protein is UDP-N-acetylenolpyruvoylglucosamine reductase of Legionella pneumophila (strain Corby).